Reading from the N-terminus, the 258-residue chain is Imidazole glycerol phosphate synthase subunit HisF (258 aa).

Active-site residues include D11 and D130.

Belongs to the HisA/HisF family. Heterodimer of HisH and HisF.

It is found in the cytoplasm. It carries out the reaction 5-[(5-phospho-1-deoxy-D-ribulos-1-ylimino)methylamino]-1-(5-phospho-beta-D-ribosyl)imidazole-4-carboxamide + L-glutamine = D-erythro-1-(imidazol-4-yl)glycerol 3-phosphate + 5-amino-1-(5-phospho-beta-D-ribosyl)imidazole-4-carboxamide + L-glutamate + H(+). Its pathway is amino-acid biosynthesis; L-histidine biosynthesis; L-histidine from 5-phospho-alpha-D-ribose 1-diphosphate: step 5/9. Functionally, IGPS catalyzes the conversion of PRFAR and glutamine to IGP, AICAR and glutamate. The HisF subunit catalyzes the cyclization activity that produces IGP and AICAR from PRFAR using the ammonia provided by the HisH subunit. This Escherichia coli O17:K52:H18 (strain UMN026 / ExPEC) protein is Imidazole glycerol phosphate synthase subunit HisF.